A 414-amino-acid chain; its full sequence is Dual-specificity RNA methyltransferase RlmN (414 aa).

A compositionally biased stretch (low complexity) spans 1–20 (MMSTPETATEATAPEAAPAP). Residues 1–24 (MMSTPETATEATAPEAAPAPSLGA) form a disordered region. The active-site Proton acceptor is the Glu-129. Positions 135 to 385 (ESDRGTLCVS…VRTPRGRDIL (251 aa)) constitute a Radical SAM core domain. Residues Cys-142 and Cys-388 are joined by a disulfide bond. [4Fe-4S] cluster-binding residues include Cys-149, Cys-153, and Cys-156. S-adenosyl-L-methionine-binding positions include 214 to 215 (GE), Ser-246, 268 to 270 (SLH), and Asn-345. The active-site S-methylcysteine intermediate is the Cys-388.

Belongs to the radical SAM superfamily. RlmN family. The cofactor is [4Fe-4S] cluster.

The protein localises to the cytoplasm. The catalysed reaction is adenosine(2503) in 23S rRNA + 2 reduced [2Fe-2S]-[ferredoxin] + 2 S-adenosyl-L-methionine = 2-methyladenosine(2503) in 23S rRNA + 5'-deoxyadenosine + L-methionine + 2 oxidized [2Fe-2S]-[ferredoxin] + S-adenosyl-L-homocysteine. It catalyses the reaction adenosine(37) in tRNA + 2 reduced [2Fe-2S]-[ferredoxin] + 2 S-adenosyl-L-methionine = 2-methyladenosine(37) in tRNA + 5'-deoxyadenosine + L-methionine + 2 oxidized [2Fe-2S]-[ferredoxin] + S-adenosyl-L-homocysteine. Functionally, specifically methylates position 2 of adenine 2503 in 23S rRNA and position 2 of adenine 37 in tRNAs. m2A2503 modification seems to play a crucial role in the proofreading step occurring at the peptidyl transferase center and thus would serve to optimize ribosomal fidelity. In Xanthobacter autotrophicus (strain ATCC BAA-1158 / Py2), this protein is Dual-specificity RNA methyltransferase RlmN.